A 93-amino-acid chain; its full sequence is MNGIKYAVFTDKSIRLLGKNQYTFNVESGSTRTEIKHWVELFFDVKVIAMNSHRLPVKGRRVRPIMGHTMHYRRMIITLQPGYSIPPLRKKRT.

This sequence belongs to the universal ribosomal protein uL23 family. As to quaternary structure, part of the 50S ribosomal subunit.

Its subcellular location is the plastid. The protein localises to the chloroplast. Its function is as follows. Binds to 23S rRNA. This Phaseolus angularis (Azuki bean) protein is Large ribosomal subunit protein uL23cz/uL23cy (rpl23-A).